Consider the following 523-residue polypeptide: Flavin-dependent halogenase armH5 (523 aa).

FAD-binding residues include glycine 17, alanine 20, and glutamate 50. Serine 328 and glycine 329 together coordinate chloride. Valine 330 is an FAD binding site.

This sequence belongs to the flavin-dependent halogenase family.

The catalysed reaction is melleolide F + FADH2 + chloride + O2 = 6'-chloromelleolide F + FAD + 2 H2O + H(+). In terms of biological role, flavin-dependent halogenase involved in the biosynthesis of melleolides, a range of antifungal and phytotoxic polyketide derivatives composed of an orsellinic acid (OA) moiety esterified to various sesquiterpene alcohols. The halogenase catalyzes the transfer of a single chlorine atom to the melleolide backbone, resulting in a 6'-chloromelleolide product. The enzyme acts on free substrate and does not depend on carrier-protein-dependent acceptor molecules. This Armillaria mellea (Honey mushroom) protein is Flavin-dependent halogenase armH5.